We begin with the raw amino-acid sequence, 690 residues long: Protein arginine N-methyltransferase 7 (690 aa).

2 SAM-dependent MTase PRMT-type domains span residues 14–357 and 366–690; these read QNSW…YSLW and TKSV…QKKL.

The protein belongs to the class I-like SAM-binding methyltransferase superfamily. Protein arginine N-methyltransferase family. PRMT7 subfamily.

Its function is as follows. Essential arginine methyltransferase that can both catalyze the formation of omega-N monomethylarginine (MMA) and symmetrical dimethylarginine (sDMA). Specifically mediates the symmetrical dimethylation of arginine residues in the small nuclear ribonucleoproteins SmD1 and SmD3. This Drosophila erecta (Fruit fly) protein is Protein arginine N-methyltransferase 7 (Art7).